Here is a 542-residue protein sequence, read N- to C-terminus: Chaperonin GroEL 2 (542 aa).

ATP-binding positions include 30–33 (TLGP), Lys51, 87–91 (DGTTT), Gly415, and Asp496.

This sequence belongs to the chaperonin (HSP60) family. In terms of assembly, forms a cylinder of 14 subunits composed of two heptameric rings stacked back-to-back. Interacts with the co-chaperonin GroES.

Its subcellular location is the cytoplasm. It carries out the reaction ATP + H2O + a folded polypeptide = ADP + phosphate + an unfolded polypeptide.. Together with its co-chaperonin GroES, plays an essential role in assisting protein folding. The GroEL-GroES system forms a nano-cage that allows encapsulation of the non-native substrate proteins and provides a physical environment optimized to promote and accelerate protein folding. In Mesorhizobium japonicum (strain LMG 29417 / CECT 9101 / MAFF 303099) (Mesorhizobium loti (strain MAFF 303099)), this protein is Chaperonin GroEL 2.